The chain runs to 352 residues: MSEQQTMSELKQQALVDINEANDERALQEVKVKYLGKKGSVSGLMKLMKDLPNEDKPAFGQKVNELRQTIQNELDERQQMLVKEKLNKQLAEETIDVSLPGRHIEIGSKHPLTRTIEEIEDLFLGLGYEIVNGYEVEQDHYNFEMLNLPKSHPARDMQDSFYITDEILLRTHTSPVQARTMESRHGQGPVKIICPGKVYRRDSDDATHSHQFTQIEGLVVDKNVKMSDLKGTLELLAKKLFGADREIRLRPSYFPFTEPSVEVDVSCFKCKGKGCNVCKHTGWIEILGAGMVHPNVLEMAGFDSSEYSGFAFGMGPDRIAMLKYGIEDIRHFYTNDVRFLDQFKAVEDRGDM.

A Mg(2+)-binding site is contributed by glutamate 258.

This sequence belongs to the class-II aminoacyl-tRNA synthetase family. Phe-tRNA synthetase alpha subunit type 1 subfamily. As to quaternary structure, tetramer of two alpha and two beta subunits. Requires Mg(2+) as cofactor.

The protein resides in the cytoplasm. The enzyme catalyses tRNA(Phe) + L-phenylalanine + ATP = L-phenylalanyl-tRNA(Phe) + AMP + diphosphate + H(+). The sequence is that of Phenylalanine--tRNA ligase alpha subunit from Staphylococcus aureus (strain NCTC 8325 / PS 47).